We begin with the raw amino-acid sequence, 399 residues long: Transferrin receptor subunit ESAG6 (399 aa).

The signal sequence occupies residues 1 to 17 (MRFWFVLLALLGKEIYA). 2 N-linked (GlcNAc...) asparagine glycosylation sites follow: N26 and N110. 3 cysteine pairs are disulfide-bonded: C34-C161, C84-C312, and C144-C215. N-linked (GlcNAc...) asparagine glycans are attached at residues N235, N250, and N360. N376 carries GPI-anchor amidated asparagine lipidation. A propeptide spans 377–399 (AAAIHLSVSTAALCRSALLLGVL) (removed in mature form).

Heterodimer composed of ESAG6 and ESAG7. Post-translationally, N-glycosylated. Glycosylation is dispensable for heterodimer formation and host transferrin binding.

The protein localises to the cell membrane. It is found in the flagellar pocket. Its function is as follows. Transferrin receptor subunit involved in receptor-mediated acquisition of iron from the environment by binding host TF/transferrin. The polypeptide is Transferrin receptor subunit ESAG6 (Trypanosoma brucei brucei).